A 170-amino-acid polypeptide reads, in one-letter code: MDSSQYRLKATLTQLCLCSRGVRNVTSEHPEQQDSSLTLWRPWLLRAGDRELDGQQRRLGEADGDHRNTGPKGALGFQHPVRLYMPKSKTSEYLQHMGKKVLANFPVQATIHFYNDDSDSEEEEEDDEMEFYNYYQNCAANGVNSSRGSGDNYSVPGGPKRNISSHTGSA.

The short motif at 40–43 (WRPW) is the WRPW motif element. The segment at 79–114 (HPVRLYMPKSKTSEYLQHMGKKVLANFPVQATIHFY) is ripply homology domain. Over residues 143–152 (VNSSRGSGDN) the composition is skewed to polar residues. A disordered region spans residues 143-170 (VNSSRGSGDNYSVPGGPKRNISSHTGSA).

Belongs to the ripply family. In terms of assembly, interacts with tbx1 and tle4/grg4.

The protein resides in the nucleus. In terms of biological role, acts as a transcriptional corepressor. Negative regulator of the transcriptional activity of tbx1 that plays a key role in pharyngeal development. Plays a role in the formation of the anteroposterior (AP) axis during embryonic development; required to establish the posterolateral border of the pre-placodal ectoderm (PPE) acting downstream of the retinoic acid receptor (RAR) signaling. The polypeptide is Protein ripply3 (Xenopus tropicalis (Western clawed frog)).